The primary structure comprises 107 residues: U1-lycotoxin-Ls1b (107 aa).

A signal peptide spans 1-20 (MMKVLVVIALLVTLISYSSS). Positions 21-41 (EGIDDLEADELLSLMANEQTR) are excised as a propeptide. Cystine bridges form between Cys44–Cys59, Cys51–Cys68, Cys58–Cys86, and Cys70–Cys84.

The protein belongs to the neurotoxin 19 (CSTX) family. 04 (U1-Lctx) subfamily. Expressed by the venom gland.

The protein resides in the secreted. The protein is U1-lycotoxin-Ls1b of Lycosa singoriensis (Wolf spider).